Reading from the N-terminus, the 91-residue chain is UPF0223 protein SAR1071 (91 aa).

It belongs to the UPF0223 family.

This is UPF0223 protein SAR1071 from Staphylococcus aureus (strain MRSA252).